The chain runs to 503 residues: Xylan O-acetyltransferase 12 (503 aa).

The Cytoplasmic segment spans residues 1–54 (MWSALFSHLREVHKRSGVKEEKLIMKSPAAAGEAAGCHKPQATATNKMTVLQSP). The helical; Signal-anchor for type II membrane protein transmembrane segment at 55–77 (LGLRTILTSLVAFFIVVSSVSLL) threads the bilayer. Residues 78 to 503 (FDRSQDAQAQ…EFLYAYLMHK (426 aa)) are Lumenal-facing. 4 cysteine pairs are disulfide-bonded: C153–C204, C175–C240, C184–C484, and C400–C480. N154, N164, N190, and N210 each carry an N-linked (GlcNAc...) asparagine glycan. The short motif at 227–229 (GDS) is the GDS motif element. S229 serves as the catalytic Nucleophile. N-linked (GlcNAc...) asparagine glycosylation is found at N256, N268, N373, N402, and N443. D479 serves as the catalytic Proton donor. The DXXH motif signature appears at 479–482 (DCTH). H482 acts as the Proton acceptor in catalysis.

This sequence belongs to the PC-esterase family. TBL subfamily.

The protein localises to the golgi apparatus membrane. Functionally, xylan acetyltransferase required for 2-O- and 3-O-monoacetylation of xylosyl residues in xylan. Catalyzes the 2-O-acetylation of xylan, followed by nonenzymatic acetyl migration to the O-3 position, resulting in products that are monoacetylated at both O-2 and O-3 positions. The protein is Xylan O-acetyltransferase 12 of Oryza sativa subsp. japonica (Rice).